We begin with the raw amino-acid sequence, 204 residues long: Probable peptidyl-tRNA hydrolase (204 aa).

Catalysis depends on His36, which acts as the Proton acceptor. Residues Asn86 and Asn132 each contribute to the tRNA site.

This sequence belongs to the PTH family.

It catalyses the reaction an N-acyl-L-alpha-aminoacyl-tRNA + H2O = an N-acyl-L-amino acid + a tRNA + H(+). Peptidyl-tRNA hydrolase that cleaves nascent chains-tRNAs that are not stably fixed in the P-site of 60S ribosome-nascent chain complexes. Acts downstream of the ribosome-associated quality control (RQC) pathway to release non-ubiquitinated nascent chains from 60S and 80S ribosome-nascent chain complexes. Does not act on ubiquitinated nascent chains, which are cleaved by ANKZF1 for degradation. In Mus musculus (Mouse), this protein is Probable peptidyl-tRNA hydrolase.